Reading from the N-terminus, the 186-residue chain is Chromosomal replication initiator protein DnaA (186 aa).

Glu-1 is a region of interest (domain I, interacts with DnaA modulators). Residue Glu-1 is a region of interest, domain II. The tract at residues Glu-1–Ser-99 is domain III, AAA+ region. The interval Leu-100–Thr-186 is domain IV, binds dsDNA.

Belongs to the DnaA family. As to quaternary structure, oligomerizes as a right-handed, spiral filament on DNA at oriC.

The protein localises to the cytoplasm. Functionally, plays an essential role in the initiation and regulation of chromosomal replication. ATP-DnaA binds to the origin of replication (oriC) to initiate formation of the DNA replication initiation complex once per cell cycle. Binds the DnaA box (a 9 base pair repeat at the origin) and separates the double-stranded (ds)DNA. Forms a right-handed helical filament on oriC DNA; dsDNA binds to the exterior of the filament while single-stranded (ss)DNA is stabiized in the filament's interior. The ATP-DnaA-oriC complex binds and stabilizes one strand of the AT-rich DNA unwinding element (DUE), permitting loading of DNA polymerase. After initiation quickly degrades to an ADP-DnaA complex that is not apt for DNA replication. Binds acidic phospholipids. In Wolbachia sp, this protein is Chromosomal replication initiator protein DnaA.